Here is a 280-residue protein sequence, read N- to C-terminus: NAD(+) hydrolase TirS (280 aa).

The stretch at 22–94 (MNKLPDEIDR…KINLQKEQSR (73 aa)) forms a coiled coil. Positions 141 to 275 (IEYDVFLSHS…EIVEKIYQVI (135 aa)) constitute a TIR domain. NAD(+) contacts are provided by residues 150–151 (SS) and Glu-180. Residue Glu-216 is part of the active site.

Its subcellular location is the secreted. It catalyses the reaction NAD(+) + H2O = ADP-D-ribose + nicotinamide + H(+). The catalysed reaction is NADP(+) + H2O = ADP-D-ribose 2'-phosphate + nicotinamide + H(+). Its function is as follows. Virulence factor that suppresses host Toll-like receptor 2 (TLR2)-mediated NF-kappa-B signaling upon infection. NAD(+) hydrolase (NADase) that catalyzes cleavage of NAD(+) into ADP-D-ribose (ADPR) and nicotinamide. Also able to hydrolyze NADP(+), but not other NAD(+)-related molecules. Able to reduce NAD(+) levels in host cells. This chain is NAD(+) hydrolase TirS, found in Staphylococcus aureus (strain MSSA476).